The chain runs to 86 residues: MVKIRLTRGGAKKRPFYHIIVTDVRSARDGRNIERLGYYNPVAQGAEPRVVLDVARVDHWVGQGAQLTDKVRNLYREASKSQAAAA.

It belongs to the bacterial ribosomal protein bS16 family.

The chain is Small ribosomal subunit protein bS16 from Xanthomonas campestris pv. campestris (strain 8004).